A 264-amino-acid chain; its full sequence is uncharacterized protein (264 aa).

15 to 22 (KGGTGKTT) provides a ligand contact to ATP.

Belongs to the ParA family. MinD subfamily.

This is an uncharacterized protein from Methanocaldococcus jannaschii (strain ATCC 43067 / DSM 2661 / JAL-1 / JCM 10045 / NBRC 100440) (Methanococcus jannaschii).